The chain runs to 148 residues: Large ribosomal subunit protein uL15 (148 aa).

Residues 1 to 61 (MKINDLKPAP…GGQMPLQRRV (61 aa)) form a disordered region.

The protein belongs to the universal ribosomal protein uL15 family. In terms of assembly, part of the 50S ribosomal subunit.

Its function is as follows. Binds to the 23S rRNA. In Thermodesulfovibrio yellowstonii (strain ATCC 51303 / DSM 11347 / YP87), this protein is Large ribosomal subunit protein uL15.